The sequence spans 382 residues: 1-deoxy-D-xylulose 5-phosphate reductoisomerase (382 aa).

Thr10, Gly11, Ser12, Ile13, Gly36, Lys37, Asn38, and Asn121 together coordinate NADPH. Residue Lys122 coordinates 1-deoxy-D-xylulose 5-phosphate. Glu123 lines the NADPH pocket. A Mn(2+)-binding site is contributed by Asp147. Positions 148, 149, 173, and 196 each coordinate 1-deoxy-D-xylulose 5-phosphate. Glu149 contributes to the Mn(2+) binding site. Gly202 is an NADPH binding site. Residues Ser209, Asn214, Lys215, and Glu218 each coordinate 1-deoxy-D-xylulose 5-phosphate. Glu218 provides a ligand contact to Mn(2+).

It belongs to the DXR family. The cofactor is Mg(2+). Requires Mn(2+) as cofactor.

It carries out the reaction 2-C-methyl-D-erythritol 4-phosphate + NADP(+) = 1-deoxy-D-xylulose 5-phosphate + NADPH + H(+). Its pathway is isoprenoid biosynthesis; isopentenyl diphosphate biosynthesis via DXP pathway; isopentenyl diphosphate from 1-deoxy-D-xylulose 5-phosphate: step 1/6. Its function is as follows. Catalyzes the NADPH-dependent rearrangement and reduction of 1-deoxy-D-xylulose-5-phosphate (DXP) to 2-C-methyl-D-erythritol 4-phosphate (MEP). In Halalkalibacterium halodurans (strain ATCC BAA-125 / DSM 18197 / FERM 7344 / JCM 9153 / C-125) (Bacillus halodurans), this protein is 1-deoxy-D-xylulose 5-phosphate reductoisomerase.